A 151-amino-acid chain; its full sequence is Chromophore lyase CpcS/CpeS homolog (151 aa).

Belongs to the CpcS/CpeS biliprotein lyase family.

The protein resides in the plastid. It is found in the chloroplast. In terms of biological role, might function to covalently attach a chromophore to Cys residue(s) of phycobiliproteins. This chain is Chromophore lyase CpcS/CpeS homolog, found in Gracilaria tenuistipitata var. liui (Red alga).